A 315-amino-acid polypeptide reads, in one-letter code: Ribosomal RNA small subunit methyltransferase H (315 aa).

Residues 35-37, D55, F79, D101, and Q108 each bind S-adenosyl-L-methionine; that span reads GGH.

It belongs to the methyltransferase superfamily. RsmH family.

It is found in the cytoplasm. The catalysed reaction is cytidine(1402) in 16S rRNA + S-adenosyl-L-methionine = N(4)-methylcytidine(1402) in 16S rRNA + S-adenosyl-L-homocysteine + H(+). Specifically methylates the N4 position of cytidine in position 1402 (C1402) of 16S rRNA. This is Ribosomal RNA small subunit methyltransferase H from Sodalis glossinidius (strain morsitans).